The primary structure comprises 130 residues: uncharacterized protein (130 aa).

An N-terminal signal peptide occupies residues methionine 1 to alanine 18.

This is an uncharacterized protein from Arabidopsis thaliana (Mouse-ear cress).